Here is a 61-residue protein sequence, read N- to C-terminus: UPF0391 membrane protein Pnap_0032 (61 aa).

Transmembrane regions (helical) follow at residues 5 to 25 and 33 to 53; these read AIIF…GVAA and VLFG…ALGV.

It belongs to the UPF0391 family.

It localises to the cell membrane. This Polaromonas naphthalenivorans (strain CJ2) protein is UPF0391 membrane protein Pnap_0032.